Here is a 178-residue protein sequence, read N- to C-terminus: MDMVKVNSMDFGEFVDVFGNIVEKCPLIAAAVWSQRPFSGLEDLENHFFAFIDALPRSGQEGILRCHPDLAGRDLQQGTLTAESQREQSQAGLTSLDTDDRLRLQQLNAQYRERFGFPFVLAARLSDRATVPRELARRLQCQPESELRTALGEVKKISHLRLTDLLGAHSHSARVELP.

The active-site Proton donor is His67. Substrate contacts are provided by residues Pro68, 84-88 (SQREQ), and 119-123 (FVLAA).

This sequence belongs to the OHCU decarboxylase family.

The protein localises to the peroxisome. It carries out the reaction 5-hydroxy-2-oxo-4-ureido-2,5-dihydro-1H-imidazole-5-carboxylate + H(+) = (S)-allantoin + CO2. It functions in the pathway purine metabolism; urate degradation; (S)-allantoin from urate: step 3/3. Its function is as follows. Catalyzes the stereoselective decarboxylation of 2-oxo-4-hydroxy-4-carboxy-5-ureidoimidazoline (OHCU) to (S)-allantoin. The protein is 2-oxo-4-hydroxy-4-carboxy-5-ureidoimidazoline decarboxylase (Urad) of Mus musculus (Mouse).